An 847-amino-acid chain; its full sequence is MRVPLSWLGEYVDLEPGTTPAEVHAALVSVGLEEEGVHTFGIEGPVVVGEVIDFVEEPQSNGKTIRWCQVRVAAEGQKAADGGADVRGIVCGAGNFFPGDKVVVTLPGAALPGPAPLTPFVIAARKTYGHVSDGMIASARELGLGDDHDGILRLSTLGLDPEVGADAVSLLGLDDTAVEVNVTPDRGYAFSIRGIAREYAHATGAAFRDPAEAVASPPPHAHGFSVAVEDRAPIRDRVGASVFVTRVVRDVDATRPTPPWMVARLKLAGIRSISLVVDITNYVMLELGQPTHGYDLDRLSGGIVVRRAHAGETLVTLDDQTRALHAEDLLITDDSGAIGLAGVMGGASTEIGAGTRNVLVEAANFDPVSIARTARRHKLPSEASKRFERGVDPRVAVAAAARVVQLLEQLAGGTADGLGSLLDETADAEPIRLPDDYIPNLIGVAFTDDEVRGALAEIGGSVSDTEGALLVVPPTWRPDLRDKSDLAEEVARIVGFDRIPSVLPVAPPGRGLSRAQTLRRAVAQTLADNGATEVLAFPFVGAAQNDLFGSPEPGGVPAVKLANPLDATAAYLRTSLLPGLLGIAKRNLARGLVDLSVYETGTVFLPGAALGSETLPPGAALPSRETLAGLNAGIPDQPRHLAGVVLGHTVRKQPGQPAVAAGLADALAMVDQAAAAVGVAVEPVQSRHQALHPGRTAQLVAGDGVRTVLGYAGELSPALAAELDLPRVVAVFELDLDALIAVAPAEIVAGTIAGFPAATQDLSLVVGDEVPAGEVLRAVREGAGALLEDIRLVDDYRGTGLPDSSKSLTFALRFRADDRTLTAAEASEAKQAGAARAGQLFGAAIRE.

The region spanning 40–168 is the tRNA-binding domain; it reads FGIEGPVVVG…LDPEVGADAV (129 aa). Positions 426–501 constitute a B5 domain; sequence ADAEPIRLPD…RIVGFDRIPS (76 aa). 4 residues coordinate Mg(2+): Asp479, Asp485, Glu488, and Glu489. The FDX-ACB domain maps to 753–846; that stretch reads AGFPAATQDL…AGQLFGAAIR (94 aa).

It belongs to the phenylalanyl-tRNA synthetase beta subunit family. Type 1 subfamily. In terms of assembly, tetramer of two alpha and two beta subunits. Requires Mg(2+) as cofactor.

The protein localises to the cytoplasm. It carries out the reaction tRNA(Phe) + L-phenylalanine + ATP = L-phenylalanyl-tRNA(Phe) + AMP + diphosphate + H(+). This Leifsonia xyli subsp. xyli (strain CTCB07) protein is Phenylalanine--tRNA ligase beta subunit.